The following is a 742-amino-acid chain: Ion-translocating oxidoreductase complex subunit C (742 aa).

4Fe-4S ferredoxin-type domains follow at residues 369–397 (GEPQ…QQLY) and 407–436 (KATT…VQYF). Residues Cys377, Cys380, Cys383, Cys387, Cys416, Cys419, Cys422, and Cys426 each coordinate [4Fe-4S] cluster. Positions 602–719 (KLEQQQANAE…PEEQVDPRKA (118 aa)) are disordered.

The protein belongs to the 4Fe4S bacterial-type ferredoxin family. RnfC subfamily. As to quaternary structure, the complex is composed of six subunits: RsxA, RsxB, RsxC, RsxD, RsxE and RsxG. Requires [4Fe-4S] cluster as cofactor.

The protein resides in the cell inner membrane. Part of a membrane-bound complex that couples electron transfer with translocation of ions across the membrane. Required to maintain the reduced state of SoxR. The sequence is that of Ion-translocating oxidoreductase complex subunit C from Escherichia coli O6:H1 (strain CFT073 / ATCC 700928 / UPEC).